Reading from the N-terminus, the 141-residue chain is Hemoglobin subunit alpha (141 aa).

Residues 1–141 (VLSPADKSNV…VSTVLTSKYR (141 aa)) form the Globin domain. At S3 the chain carries Phosphoserine. Residues K7 and K11 each carry the N6-succinyllysine modification. K16 is modified (N6-acetyllysine; alternate). At K16 the chain carries N6-succinyllysine; alternate. Y24 is subject to Phosphotyrosine. S35 carries the post-translational modification Phosphoserine. K40 bears the N6-succinyllysine mark. At S49 the chain carries Phosphoserine. H58 provides a ligand contact to O2. Residue H87 coordinates heme b. Phosphoserine is present on S102. T108 is subject to Phosphothreonine. S124 and S131 each carry phosphoserine. Residues T134 and T137 each carry the phosphothreonine modification. S138 is modified (phosphoserine).

The protein belongs to the globin family. In terms of assembly, heterotetramer of two alpha chains and two beta chains. In terms of tissue distribution, red blood cells.

Functionally, involved in oxygen transport from the lung to the various peripheral tissues. In terms of biological role, hemopressin acts as an antagonist peptide of the cannabinoid receptor CNR1. Hemopressin-binding efficiently blocks cannabinoid receptor CNR1 and subsequent signaling. In Saguinus mystax (Moustached tamarin), this protein is Hemoglobin subunit alpha (HBA).